The sequence spans 508 residues: Photosystem II CP47 reaction center protein (508 aa).

The next 6 membrane-spanning stretches (helical) occupy residues 21–36 (SVHI…WAGS), 101–115 (IVFS…IWHW), 140–156 (GIHL…FGAF), 203–218 (IAAG…FHLS), 237–252 (VLSS…AFVV), and 457–472 (TFAL…HGAR).

The protein belongs to the PsbB/PsbC family. PsbB subfamily. As to quaternary structure, PSII is composed of 1 copy each of membrane proteins PsbA, PsbB, PsbC, PsbD, PsbE, PsbF, PsbH, PsbI, PsbJ, PsbK, PsbL, PsbM, PsbT, PsbX, PsbY, PsbZ, Psb30/Ycf12, at least 3 peripheral proteins of the oxygen-evolving complex and a large number of cofactors. It forms dimeric complexes. Requires Binds multiple chlorophylls. PSII binds additional chlorophylls, carotenoids and specific lipids. as cofactor.

The protein resides in the plastid. Its subcellular location is the chloroplast thylakoid membrane. Its function is as follows. One of the components of the core complex of photosystem II (PSII). It binds chlorophyll and helps catalyze the primary light-induced photochemical processes of PSII. PSII is a light-driven water:plastoquinone oxidoreductase, using light energy to abstract electrons from H(2)O, generating O(2) and a proton gradient subsequently used for ATP formation. This chain is Photosystem II CP47 reaction center protein, found in Calycanthus floridus var. glaucus (Eastern sweetshrub).